The chain runs to 424 residues: UPF0597 protein Sputw3181_2955 (424 aa).

The protein belongs to the UPF0597 family.

The sequence is that of UPF0597 protein Sputw3181_2955 from Shewanella sp. (strain W3-18-1).